The chain runs to 475 residues: Aspartyl/glutamyl-tRNA(Asn/Gln) amidotransferase subunit B (475 aa).

The protein belongs to the GatB/GatE family. GatB subfamily. Heterotrimer of A, B and C subunits.

It catalyses the reaction L-glutamyl-tRNA(Gln) + L-glutamine + ATP + H2O = L-glutaminyl-tRNA(Gln) + L-glutamate + ADP + phosphate + H(+). The catalysed reaction is L-aspartyl-tRNA(Asn) + L-glutamine + ATP + H2O = L-asparaginyl-tRNA(Asn) + L-glutamate + ADP + phosphate + 2 H(+). Functionally, allows the formation of correctly charged Asn-tRNA(Asn) or Gln-tRNA(Gln) through the transamidation of misacylated Asp-tRNA(Asn) or Glu-tRNA(Gln) in organisms which lack either or both of asparaginyl-tRNA or glutaminyl-tRNA synthetases. The reaction takes place in the presence of glutamine and ATP through an activated phospho-Asp-tRNA(Asn) or phospho-Glu-tRNA(Gln). This chain is Aspartyl/glutamyl-tRNA(Asn/Gln) amidotransferase subunit B, found in Bacillus cereus (strain G9842).